The primary structure comprises 610 residues: Zinc finger protein 823 (610 aa).

The KRAB domain occupies 4–97 (VAFEDVAVNF…VNKNTPRVNP (94 aa)). 10 consecutive C2H2-type zinc fingers follow at residues 164–186 (FDCK…MAAH), 192–214 (YKCK…ERTH), 220–242 (YECK…ERIH), 248–270 (YECK…ERTH), 276–298 (YKCT…ERTH), 304–326 (YACK…MIRH), 332–354 (HKCK…ETTH), 360–382 (YECK…MITH), 388–410 (QKCK…ERTH), and 416–438 (YQCK…EATH). A C2H2-type 11; atypical zinc finger spans residues 444–465 (YKCQCGKAFSDLSSFQNHETTH). 5 consecutive C2H2-type zinc fingers follow at residues 471-493 (YECK…KRTH), 499-521 (YECK…ERIH), 527-549 (YECK…ERIH), 555-577 (YECL…EKTH), and 583-605 (YECK…KRTH).

This sequence belongs to the krueppel C2H2-type zinc-finger protein family.

The protein resides in the nucleus. May be involved in transcriptional regulation. This chain is Zinc finger protein 823 (ZNF823), found in Homo sapiens (Human).